Consider the following 321-residue polypeptide: tRNA U34 carboxymethyltransferase (321 aa).

Carboxy-S-adenosyl-L-methionine contacts are provided by residues K90, W104, K109, G129, 151–153 (DPT), 180–181 (IE), M195, Y199, and R314.

It belongs to the class I-like SAM-binding methyltransferase superfamily. CmoB family. In terms of assembly, homotetramer.

It catalyses the reaction carboxy-S-adenosyl-L-methionine + 5-hydroxyuridine(34) in tRNA = 5-carboxymethoxyuridine(34) in tRNA + S-adenosyl-L-homocysteine + H(+). In terms of biological role, catalyzes carboxymethyl transfer from carboxy-S-adenosyl-L-methionine (Cx-SAM) to 5-hydroxyuridine (ho5U) to form 5-carboxymethoxyuridine (cmo5U) at position 34 in tRNAs. The sequence is that of tRNA U34 carboxymethyltransferase from Haemophilus influenzae (strain ATCC 51907 / DSM 11121 / KW20 / Rd).